The sequence spans 55 residues: Ribosome biogenesis protein Nop10 (55 aa).

This sequence belongs to the NOP10 family.

Its function is as follows. Involved in ribosome biogenesis; more specifically in 18S rRNA pseudouridylation and in cleavage of pre-rRNA. The chain is Ribosome biogenesis protein Nop10 from Methanosphaera stadtmanae (strain ATCC 43021 / DSM 3091 / JCM 11832 / MCB-3).